Here is a 169-residue protein sequence, read N- to C-terminus: CKLF-like MARVEL transmembrane domain-containing protein 2A (169 aa).

A run of 4 helical transmembrane segments spans residues Phe-40–Leu-60, His-69–Leu-89, Ile-98–Leu-118, and Tyr-136–Leu-156. Residues Phe-40–Arg-162 form the MARVEL domain.

It belongs to the chemokine-like factor family.

It localises to the membrane. In Mus musculus (Mouse), this protein is CKLF-like MARVEL transmembrane domain-containing protein 2A (Cmtm2a).